A 578-amino-acid polypeptide reads, in one-letter code: Arginine--tRNA ligase (578 aa).

The 'HIGH' region motif lies at 127–137 (PNLAKEMHVGH).

Belongs to the class-I aminoacyl-tRNA synthetase family. As to quaternary structure, monomer.

The protein localises to the cytoplasm. It carries out the reaction tRNA(Arg) + L-arginine + ATP = L-arginyl-tRNA(Arg) + AMP + diphosphate. This is Arginine--tRNA ligase from Pseudomonas fluorescens (strain SBW25).